A 154-amino-acid chain; its full sequence is MTHDNKLQVEAIKCGTVIDHIPAQIGFKLLTLFKLTATDQRITIGLNLPSNELGRKDLIKIENTFLTEQQANQLAMYAPKATVNRIDNYEVVRKLTLSLPDHIDGVLTCPNGNCISRSEPVRSSFSVKSRGGEVHLKCRYCEKEFEHQVVLQAD.

Positions 109, 114, 138, and 141 each coordinate Zn(2+).

This sequence belongs to the PyrI family. In terms of assembly, heterododecamer (2C3:3R2) of six catalytic PyrB chains organized as two trimers (C3), and six regulatory PyrI chains organized as three dimers (R2). Zn(2+) serves as cofactor.

Its function is as follows. Involved in allosteric regulation of aspartate carbamoyltransferase. The protein is Aspartate carbamoyltransferase regulatory chain (pyrI) of Serratia marcescens.